A 145-amino-acid polypeptide reads, in one-letter code: MKKSARRQSRELATQGLYQWLLSNASSGEIDAQLRGALGYDKADKELLEAILHGVIREHATLVEAITPSLDRPIDQLSPVERAVLLIATFELTHHVETPYRVIINEAVELTKTFGGSDGYKYVNGVLDKLAAKLRPAETQARRNS.

Belongs to the NusB family.

Its function is as follows. Involved in transcription antitermination. Required for transcription of ribosomal RNA (rRNA) genes. Binds specifically to the boxA antiterminator sequence of the ribosomal RNA (rrn) operons. The chain is Transcription antitermination protein NusB from Burkholderia vietnamiensis (strain G4 / LMG 22486) (Burkholderia cepacia (strain R1808)).